A 629-amino-acid chain; its full sequence is Ribosomal protein S6 kinase 2 beta (629 aa).

The Protein kinase 1 domain occupies 62–321; sequence FVLLKVLGQG…AEELKRHPFF (260 aa). ATP contacts are provided by residues 68-76 and K94; that span reads LGQGSFGKV. The active-site Proton acceptor is D187. Phosphoserine is present on S221. Positions 322–391 constitute an AGC-kinase C-terminal domain; that stretch reads STIDWNKLYR…VAPVLVEEDA (70 aa). T359 carries the post-translational modification Phosphothreonine. Phosphoserine is present on S363. Residue S380 is modified to Phosphoserine; by autocatalysis. In terms of domain architecture, Protein kinase 2 spans 416-629; the sequence is YTVRETIGVG…PEEILARIGS (214 aa). ATP contacts are provided by residues 422–430 and K445; that span reads IGVGSYSVC. Catalysis depends on D533, which acts as the Proton acceptor. A Phosphothreonine modification is found at T571.

The protein belongs to the protein kinase superfamily. AGC Ser/Thr protein kinase family. S6 kinase subfamily. Mg(2+) serves as cofactor. In terms of processing, autophosphorylated on Ser-380, as part of the activation process.

The catalysed reaction is L-seryl-[protein] + ATP = O-phospho-L-seryl-[protein] + ADP + H(+). It carries out the reaction L-threonyl-[protein] + ATP = O-phospho-L-threonyl-[protein] + ADP + H(+). With respect to regulation, activated by multiple phosphorylations on threonine and serine residues. Its function is as follows. Serine/threonine kinase that may play a role in mediating the growth-factor and stress induced activation of transcription. The polypeptide is Ribosomal protein S6 kinase 2 beta (Xenopus laevis (African clawed frog)).